The chain runs to 712 residues: 1,4-alpha-glucan branching enzyme GlgB (712 aa).

Asp-397 (nucleophile) is an active-site residue. The Proton donor role is filled by Glu-450.

The protein belongs to the glycosyl hydrolase 13 family. GlgB subfamily. Monomer.

It catalyses the reaction Transfers a segment of a (1-&gt;4)-alpha-D-glucan chain to a primary hydroxy group in a similar glucan chain.. It functions in the pathway glycan biosynthesis; glycogen biosynthesis. Its function is as follows. Catalyzes the formation of the alpha-1,6-glucosidic linkages in glycogen by scission of a 1,4-alpha-linked oligosaccharide from growing alpha-1,4-glucan chains and the subsequent attachment of the oligosaccharide to the alpha-1,6 position. The protein is 1,4-alpha-glucan branching enzyme GlgB of Bradyrhizobium sp. (strain ORS 278).